Consider the following 84-residue polypeptide: Putative membrane protein insertion efficiency factor (84 aa).

This sequence belongs to the UPF0161 family.

The protein localises to the cell inner membrane. Functionally, could be involved in insertion of integral membrane proteins into the membrane. The sequence is that of Putative membrane protein insertion efficiency factor from Acidiphilium cryptum (strain JF-5).